The sequence spans 414 residues: 3-oxoacyl-[acyl-carrier-protein] synthase 2 (414 aa).

Residues 3-413 (KRRVVVTGMG…GTNGSLIFKR (411 aa)) enclose the Ketosynthase family 3 (KS3) domain. Active-site for beta-ketoacyl synthase activity residues include cysteine 164, histidine 304, and histidine 342.

Belongs to the thiolase-like superfamily. Beta-ketoacyl-ACP synthases family. As to quaternary structure, homodimer.

It carries out the reaction a fatty acyl-[ACP] + malonyl-[ACP] + H(+) = a 3-oxoacyl-[ACP] + holo-[ACP] + CO2. It catalyses the reaction (9Z)-hexadecenoyl-[ACP] + malonyl-[ACP] + H(+) = 3-oxo-(11Z)-octadecenoyl-[ACP] + holo-[ACP] + CO2. It functions in the pathway lipid metabolism; fatty acid biosynthesis. Involved in the type II fatty acid elongation cycle. Catalyzes the elongation of a wide range of acyl-ACP by the addition of two carbons from malonyl-ACP to an acyl acceptor. Can efficiently catalyze the conversion of palmitoleoyl-ACP (cis-hexadec-9-enoyl-ACP) to cis-vaccenoyl-ACP (cis-octadec-11-enoyl-ACP), an essential step in the thermal regulation of fatty acid composition. The sequence is that of 3-oxoacyl-[acyl-carrier-protein] synthase 2 (fabF) from Vibrio cholerae serotype O1 (strain ATCC 39315 / El Tor Inaba N16961).